A 153-amino-acid polypeptide reads, in one-letter code: Regulator of ribonuclease activity B (153 aa).

Residues 114 to 153 (DPNADDDEYGDDGEFLDDEDEYGDDGEFFDDEDEEEPRVH) form a disordered region. Residues 115–153 (PNADDDEYGDDGEFLDDEDEYGDDGEFFDDEDEEEPRVH) are compositionally biased toward acidic residues.

It belongs to the RraB family. As to quaternary structure, interacts with the C-terminal region of Rne.

It localises to the cytoplasm. In terms of biological role, globally modulates RNA abundance by binding to RNase E (Rne) and regulating its endonucleolytic activity. Can modulate Rne action in a substrate-dependent manner by altering the composition of the degradosome. The protein is Regulator of ribonuclease activity B of Haemophilus influenzae (strain ATCC 51907 / DSM 11121 / KW20 / Rd).